Here is a 212-residue protein sequence, read N- to C-terminus: Protein-L-isoaspartate O-methyltransferase (212 aa).

The active site involves S60.

The protein belongs to the methyltransferase superfamily. L-isoaspartyl/D-aspartyl protein methyltransferase family.

The protein resides in the cytoplasm. It catalyses the reaction [protein]-L-isoaspartate + S-adenosyl-L-methionine = [protein]-L-isoaspartate alpha-methyl ester + S-adenosyl-L-homocysteine. In terms of biological role, catalyzes the methyl esterification of L-isoaspartyl residues in peptides and proteins that result from spontaneous decomposition of normal L-aspartyl and L-asparaginyl residues. It plays a role in the repair and/or degradation of damaged proteins. The protein is Protein-L-isoaspartate O-methyltransferase of Pseudomonas entomophila (strain L48).